The chain runs to 137 residues: Large ribosomal subunit protein uL16 (137 aa).

It belongs to the universal ribosomal protein uL16 family. As to quaternary structure, part of the 50S ribosomal subunit.

Binds 23S rRNA and is also seen to make contacts with the A and possibly P site tRNAs. This Brucella abortus (strain S19) protein is Large ribosomal subunit protein uL16.